We begin with the raw amino-acid sequence, 265 residues long: Chlorophyll a-b binding protein 1C, chloroplastic (265 aa).

Residues 1–34 constitute a chloroplast transit peptide; sequence MAAATMALSSPSFAGQAVKLSPSASEISGNGRIT. The helical transmembrane segment at 151-171 threads the bilayer; that stretch reads LVHAQSILAIWACQVVLMGAV. Positions 152, 156, 164, 172, 175, and 181 each coordinate chlorophyll b. Lysine 212, glutamate 213, asparagine 216, arginine 218, glutamine 230, histidine 245, and alanine 254 together coordinate chlorophyll a. Residues 219–239 traverse the membrane as a helical segment; sequence LAMFSMFGFFVQAIVTGKGPL. Residue phenylalanine 261 participates in chlorophyll b binding.

Belongs to the light-harvesting chlorophyll a/b-binding (LHC) protein family. As to quaternary structure, the LHC complex consists of chlorophyll a-b binding proteins. Binds at least 14 chlorophylls (8 Chl-a and 6 Chl-b) and carotenoids such as lutein and neoxanthin. serves as cofactor. Post-translationally, photoregulated by reversible phosphorylation of its threonine residues.

Its subcellular location is the plastid. It is found in the chloroplast thylakoid membrane. Functionally, the light-harvesting complex (LHC) functions as a light receptor, it captures and delivers excitation energy to photosystems with which it is closely associated. The polypeptide is Chlorophyll a-b binding protein 1C, chloroplastic (CAB1C) (Solanum lycopersicum (Tomato)).